Reading from the N-terminus, the 228-residue chain is DNA-binding response regulator MtrA (228 aa).

The region spanning 7–120 (RILVVDDDPS…ELVARVRARL (114 aa)) is the Response regulatory domain. Aspartate 56 bears the 4-aspartylphosphate mark. The ompR/PhoB-type DNA-binding region spans 128–227 (AEMLSIGDVE…VRGVGYKAGP (100 aa)).

In terms of assembly, probably a monomer when inactive, phosphorylation may permit it to oligomerize. The monomeric form does not seem to be phosphorylated. Post-translationally, phosphorylated by MtrB.

The protein localises to the cytoplasm. Member of the two-component regulatory system MtrA/MtrB, responding to environmental signals. Controls expression of a number of genes including dnaA, ripA, fbpB and probably itself. Probably plays a role in cell division. In Mycolicibacterium smegmatis (strain ATCC 700084 / mc(2)155) (Mycobacterium smegmatis), this protein is DNA-binding response regulator MtrA (mtrA).